Here is a 167-residue protein sequence, read N- to C-terminus: NAD(P)H-quinone oxidoreductase subunit I, chloroplastic (167 aa).

4Fe-4S ferredoxin-type domains are found at residues 55 to 84 (GRIH…VDWK) and 95 to 124 (LNYS…MTEE). The [4Fe-4S] cluster site is built by Cys64, Cys67, Cys70, Cys74, Cys104, Cys107, Cys110, and Cys114.

The protein belongs to the complex I 23 kDa subunit family. In terms of assembly, NDH is composed of at least 16 different subunits, 5 of which are encoded in the nucleus. [4Fe-4S] cluster serves as cofactor.

The protein resides in the plastid. It localises to the chloroplast thylakoid membrane. The enzyme catalyses a plastoquinone + NADH + (n+1) H(+)(in) = a plastoquinol + NAD(+) + n H(+)(out). It catalyses the reaction a plastoquinone + NADPH + (n+1) H(+)(in) = a plastoquinol + NADP(+) + n H(+)(out). In terms of biological role, NDH shuttles electrons from NAD(P)H:plastoquinone, via FMN and iron-sulfur (Fe-S) centers, to quinones in the photosynthetic chain and possibly in a chloroplast respiratory chain. The immediate electron acceptor for the enzyme in this species is believed to be plastoquinone. Couples the redox reaction to proton translocation, and thus conserves the redox energy in a proton gradient. The polypeptide is NAD(P)H-quinone oxidoreductase subunit I, chloroplastic (Eucalyptus globulus subsp. globulus (Tasmanian blue gum)).